Here is an 815-residue protein sequence, read N- to C-terminus: BTB/POZ domain-containing protein KCTD3 (815 aa).

Residues 18–87 (EIVQLNVGGT…LRTKELDLRG (70 aa)) enclose the BTB domain. Polar residues predominate over residues 139 to 168 (INNTVRSADSRNGLNSTEGEARGNGTQPVL). The interval 139–170 (INNTVRSADSRNGLNSTEGEARGNGTQPVLSG) is disordered. 8 WD repeats span residues 174–218 (ETVR…GWQQ), 224–263 (YLDW…LWSV), 270–305 (SEIG…VWNA), 310–342 (WQVQ…YIDM), 354–404 (LLVT…VQHP), 412–449 (QLFQ…TWTV), 457–504 (STQP…IQKV), and 510–569 (KLFV…MWDL). The segment at 512–815 (FVRLSSTGKR…SDSSGQEYSL (304 aa)) is interaction with HCN3. Phosphoserine is present on residues S604, S664, and S711. Over residues 736-758 (SESKKRSSEDENENKIEFRKKGG) the composition is skewed to basic and acidic residues. Residues 736 to 815 (SESKKRSSED…SDSSGQEYSL (80 aa)) form a disordered region. The segment covering 774–800 (ASSPSTSDGGTDSPGTASPSPTKTTPS) has biased composition (low complexity). Phosphoserine is present on S793.

The protein belongs to the KCTD3 family. As to quaternary structure, interacts with HCN3. In terms of tissue distribution, broadly expressed in normal tissues.

Its subcellular location is the cell membrane. Its function is as follows. Accessory subunit of potassium/sodium hyperpolarization-activated cyclic nucleotide-gated channel 3 (HCN3) up-regulating its cell-surface expression and current density without affecting its voltage dependence and kinetics. In Homo sapiens (Human), this protein is BTB/POZ domain-containing protein KCTD3 (KCTD3).